Here is a 577-residue protein sequence, read N- to C-terminus: MALVDLVRAGGYSIEYPQFSSMAKLKEFPHSEDGKLVRLLSWHEGVGLGGGLFKVSTSSTATGNDGTVVVASNGVRLLRVVNGPIWADMFGALPNSDIDSMPAVAAAYAYAASVNTDLYIGVATYKFKGSTPINIDPSRAGIIGYQGKVRIDCSEFTGSIVFSINSSYSYTPAAYYNNLSPALQGLYVLGAKTSGVDGLLVGRETVGADKSYNGQTEIRECTFDKFDRNIRMGHNSWRFVFYKVNSLNALSPNGILYVPAGLDDSGEILSFYHCQFFDGAGSNIRLSCSSYTMVFNTCSFLNITFFVDSASSATVTCNGCNFENPGSASTRRYVDISAGHTNVFNIIGGSIVTNSNPGQTQALLYVSTNNLLNLVGVTVPYGGHYQQEQELGYHAFIGGAGTVTASGVMLQLRNGAGTCPLHSSLSTFSNWDFGYGNLNAWTVDKGAGTSSVVEYLANAGPKGTGGAMRVAPVSVGTNVSQVQAVTNPGMFSMSCMVNIATTSGNAGQISIGFLDAAGNSIPGGVSANLGTTTGWKVIGKNTLRGKVPIGAKQIRVNVQTVAGADVKYAYLLCNVVK.

It belongs to the K2-specific depolymerase family. In terms of assembly, homotrimer.

It is found in the virion. Functionally, functions as a receptor binding protein (RBP) and mediates the attachment to the host capsular exopolysaccharides. Displays a depolymerase activity that specifically degrades the K2-type polysaccharides of Klebsiella pneumoniae capsule. The polypeptide is Depolymerase, capsule K2-specific (Klebsiella phage vB_KpnP_KpV74 (Bacteriophage vB_KpnP_KpV74)).